We begin with the raw amino-acid sequence, 976 residues long: Villin-2 (976 aa).

Gelsolin-like repeat units follow at residues 27–77 (FEAV…DEAG), 148–188 (IRLK…QERA), 260–302 (GKME…DERK), 399–450 (GKVK…EDQD), 531–571 (NKAV…EQLE), and 633–674 (FQVE…KEKQ). Residues 769–917 (NSSSNRPAYS…SEIQPSGATF (149 aa)) are disordered. Residues 782–794 (RLNESHDGPRQRA) are compositionally biased toward basic and acidic residues. Low complexity-rich tracts occupy residues 795-812 (EALA…SSTK), 823-841 (SQAS…VLVA), and 848-858 (DTSPTRRSTSS). Residue S890 is modified to Phosphoserine. A compositionally biased stretch (polar residues) spans 908–917 (SEIQPSGATF). The 66-residue stretch at 911 to 976 (QPSGATFTYE…DLLKKKFDLF (66 aa)) folds into the HP domain.

The protein belongs to the villin/gelsolin family. As to expression, expressed in all tissues examined. Mainly detected in the root epidermis and vasculature. Expressed in the root cap.

The protein resides in the cytoplasm. The protein localises to the cytoskeleton. Ca(2+)-regulated actin-binding protein. Involved in actin filaments bundling. Caps the barbed end of actin filaments and is able to sever them in a calcium-dependent manner. Required for the construction of actin collars in pollen tubes. Acts redundantly with VLN5 (AC Q9LVC6) to generate thick actin filament bundles and to regulate polarized pollen tube growth. Acts redundantly with VLN3 (AC O81645) to regulate directional organ growth and in sclerenchyma development. The protein is Villin-2 of Arabidopsis thaliana (Mouse-ear cress).